Here is a 449-residue protein sequence, read N- to C-terminus: tRNA-2-methylthio-N(6)-dimethylallyladenosine synthase (449 aa).

Positions 13–128 (RRIFIETYGC…LPHLIGTVEK (116 aa)) constitute an MTTase N-terminal domain. The [4Fe-4S] cluster site is built by Cys22, Cys58, Cys92, Cys166, Cys170, and Cys173. The 232-residue stretch at 152–383 (SRIKISGFIS…ITLQLKISLM (232 aa)) folds into the Radical SAM core domain. Positions 386-449 (KENIGKTMEI…AATLFGDPKL (64 aa)) constitute a TRAM domain.

This sequence belongs to the methylthiotransferase family. MiaB subfamily. As to quaternary structure, monomer. [4Fe-4S] cluster serves as cofactor.

It localises to the cytoplasm. The enzyme catalyses N(6)-dimethylallyladenosine(37) in tRNA + (sulfur carrier)-SH + AH2 + 2 S-adenosyl-L-methionine = 2-methylsulfanyl-N(6)-dimethylallyladenosine(37) in tRNA + (sulfur carrier)-H + 5'-deoxyadenosine + L-methionine + A + S-adenosyl-L-homocysteine + 2 H(+). In terms of biological role, catalyzes the methylthiolation of N6-(dimethylallyl)adenosine (i(6)A), leading to the formation of 2-methylthio-N6-(dimethylallyl)adenosine (ms(2)i(6)A) at position 37 in tRNAs that read codons beginning with uridine. This is tRNA-2-methylthio-N(6)-dimethylallyladenosine synthase from Azobacteroides pseudotrichonymphae genomovar. CFP2.